The following is a 194-amino-acid chain: Probable proteasome subunit beta type-4 (194 aa).

The protein belongs to the peptidase T1B family. In terms of assembly, the 26S proteasome consists of a 20S proteasome core and two 19S regulatory subunits. The 20S proteasome core is composed of 28 subunits that are arranged in four stacked rings, resulting in a barrel-shaped structure. The two end rings are each formed by seven alpha subunits, and the two central rings are each formed by seven beta subunits. The catalytic chamber with the active sites is on the inside of the barrel.

It is found in the cytoplasm. Its subcellular location is the nucleus. Functionally, non-catalytic component of the proteasome, a multicatalytic proteinase complex which is characterized by its ability to cleave peptides with Arg, Phe, Tyr, Leu, and Glu adjacent to the leaving group at neutral or slightly basic pH. The proteasome has an ATP-dependent proteolytic activity. The chain is Probable proteasome subunit beta type-4 from Schizosaccharomyces pombe (strain 972 / ATCC 24843) (Fission yeast).